Here is a 297-residue protein sequence, read N- to C-terminus: Acetaldehyde dehydrogenase (297 aa).

Cysteine 128 acts as the Acyl-thioester intermediate in catalysis. NAD(+)-binding positions include 159-167 (SAGPGTRQN) and asparagine 272.

It belongs to the acetaldehyde dehydrogenase family.

The catalysed reaction is acetaldehyde + NAD(+) + CoA = acetyl-CoA + NADH + H(+). This chain is Acetaldehyde dehydrogenase, found in Desulfitobacterium hafniense (strain DSM 10664 / DCB-2).